A 355-amino-acid polypeptide reads, in one-letter code: Holliday junction branch migration complex subunit RuvB (355 aa).

A large ATPase domain (RuvB-L) region spans residues 4 to 195 (TDKLTGADRL…FGIVARLEFY (192 aa)). Residues Leu34, Arg35, Gly76, Lys79, Thr80, Thr81, 142–144 (EDY), Arg185, Tyr195, and Arg232 each bind ATP. Thr80 contributes to the Mg(2+) binding site. Residues 196–266 (TPDELARIVA…LADAALEMLD (71 aa)) are small ATPAse domain (RuvB-S). The head domain (RuvB-H) stretch occupies residues 269 to 355 (SVGFDLMDRK…DGGADLAEGL (87 aa)). The DNA site is built by Arg305, Arg324, and Arg329.

It belongs to the RuvB family. Homohexamer. Forms an RuvA(8)-RuvB(12)-Holliday junction (HJ) complex. HJ DNA is sandwiched between 2 RuvA tetramers; dsDNA enters through RuvA and exits via RuvB. An RuvB hexamer assembles on each DNA strand where it exits the tetramer. Each RuvB hexamer is contacted by two RuvA subunits (via domain III) on 2 adjacent RuvB subunits; this complex drives branch migration. In the full resolvosome a probable DNA-RuvA(4)-RuvB(12)-RuvC(2) complex forms which resolves the HJ.

It localises to the cytoplasm. It carries out the reaction ATP + H2O = ADP + phosphate + H(+). In terms of biological role, the RuvA-RuvB-RuvC complex processes Holliday junction (HJ) DNA during genetic recombination and DNA repair, while the RuvA-RuvB complex plays an important role in the rescue of blocked DNA replication forks via replication fork reversal (RFR). RuvA specifically binds to HJ cruciform DNA, conferring on it an open structure. The RuvB hexamer acts as an ATP-dependent pump, pulling dsDNA into and through the RuvAB complex. RuvB forms 2 homohexamers on either side of HJ DNA bound by 1 or 2 RuvA tetramers; 4 subunits per hexamer contact DNA at a time. Coordinated motions by a converter formed by DNA-disengaged RuvB subunits stimulates ATP hydrolysis and nucleotide exchange. Immobilization of the converter enables RuvB to convert the ATP-contained energy into a lever motion, pulling 2 nucleotides of DNA out of the RuvA tetramer per ATP hydrolyzed, thus driving DNA branch migration. The RuvB motors rotate together with the DNA substrate, which together with the progressing nucleotide cycle form the mechanistic basis for DNA recombination by continuous HJ branch migration. Branch migration allows RuvC to scan DNA until it finds its consensus sequence, where it cleaves and resolves cruciform DNA. The chain is Holliday junction branch migration complex subunit RuvB from Cupriavidus metallidurans (strain ATCC 43123 / DSM 2839 / NBRC 102507 / CH34) (Ralstonia metallidurans).